Consider the following 658-residue polypeptide: UvrABC system protein B (658 aa).

The Helicase ATP-binding domain maps to 26–413 (EGINSGKKKQ…SPEVIEQIIR (388 aa)). 39 to 46 (GATGTGKT) lines the ATP pocket. The Beta-hairpin motif lies at 92–115 (YYDYYQPEAYVPQTDTFIEKDAQI). The Helicase C-terminal domain occupies 430 to 596 (QIDDLLGEIQ…TIQKGVRDVI (167 aa)). The region spanning 622–657 (EKTIAKMEAEMKEAAKALDFERAAELRDLLLELKAE) is the UVR domain.

This sequence belongs to the UvrB family. Forms a heterotetramer with UvrA during the search for lesions. Interacts with UvrC in an incision complex.

It is found in the cytoplasm. In terms of biological role, the UvrABC repair system catalyzes the recognition and processing of DNA lesions. A damage recognition complex composed of 2 UvrA and 2 UvrB subunits scans DNA for abnormalities. Upon binding of the UvrA(2)B(2) complex to a putative damaged site, the DNA wraps around one UvrB monomer. DNA wrap is dependent on ATP binding by UvrB and probably causes local melting of the DNA helix, facilitating insertion of UvrB beta-hairpin between the DNA strands. Then UvrB probes one DNA strand for the presence of a lesion. If a lesion is found the UvrA subunits dissociate and the UvrB-DNA preincision complex is formed. This complex is subsequently bound by UvrC and the second UvrB is released. If no lesion is found, the DNA wraps around the other UvrB subunit that will check the other stand for damage. This Bacillus cereus (strain ATCC 14579 / DSM 31 / CCUG 7414 / JCM 2152 / NBRC 15305 / NCIMB 9373 / NCTC 2599 / NRRL B-3711) protein is UvrABC system protein B.